The sequence spans 433 residues: MNVKIEGRRKIRAKVAIPSDKSISHRSIMIGSLARGTTEIENFLFAEDCLSTINCFKKLGAEIEIKNDKVIVKGKNYSLSVPQQVLDCGNSGTTTRLLLGILSTQEFEAVLDGDSSLRKRPMKRVTQPLSQMGASFEFLEKEDCLPIKVKGKKNLKPIDYTLPVSSAQVKSALIFAALKAEGKSVIKELPMSRDHTELMLKSAGADIATCFENGFYKIEVMPSNLEALKIKVPSDISSAAFFIVLALICEDSEVIIENCILNPTRTGIIDILKQMGADIEIGNVEIQNGELVGTIVARSSNLKGVVVDKNDIPRIIDEIPILAVAAAFADGKTIIDNASELRVKESDRIKTTLEMLRNFGAECYELENGLEIVGSRDNLKAGIVNSYNDHRIAMAASILACAVEGESTILNAECASISFPNFYEILLGHSKKV.

3-phosphoshikimate is bound by residues Lys-21, Ser-22, and Arg-26. Lys-21 serves as a coordination point for phosphoenolpyruvate. Phosphoenolpyruvate is bound by residues Gly-92 and Arg-120. 3-phosphoshikimate is bound by residues Ser-166, Gln-168, Asp-317, and Lys-344. Phosphoenolpyruvate is bound at residue Gln-168. Asp-317 acts as the Proton acceptor in catalysis. Phosphoenolpyruvate is bound by residues Arg-348 and Arg-391.

This sequence belongs to the EPSP synthase family. Monomer.

It is found in the cytoplasm. The enzyme catalyses 3-phosphoshikimate + phosphoenolpyruvate = 5-O-(1-carboxyvinyl)-3-phosphoshikimate + phosphate. Its pathway is metabolic intermediate biosynthesis; chorismate biosynthesis; chorismate from D-erythrose 4-phosphate and phosphoenolpyruvate: step 6/7. In terms of biological role, catalyzes the transfer of the enolpyruvyl moiety of phosphoenolpyruvate (PEP) to the 5-hydroxyl of shikimate-3-phosphate (S3P) to produce enolpyruvyl shikimate-3-phosphate and inorganic phosphate. In Caldicellulosiruptor saccharolyticus (strain ATCC 43494 / DSM 8903 / Tp8T 6331), this protein is 3-phosphoshikimate 1-carboxyvinyltransferase.